We begin with the raw amino-acid sequence, 360 residues long: Cinnamyl alcohol dehydrogenase 2 (360 aa).

In terms of domain architecture, Enoyl reductase (ER) spans Gly-23–Ile-351. Zn(2+) is bound at residue Cys-50. Ser-52 lines the an alcohol pocket. Ser-52 is a binding site for NADP(+). Zn(2+) is bound by residues Asp-53, His-72, Glu-73, Cys-103, Cys-106, Cys-109, Cys-117, and Cys-166. An an alcohol-binding site is contributed by His-72. NADP(+) contacts are provided by Leu-192, Gly-194, Leu-195, Ser-214, Thr-215, Ser-216, Lys-219, Lys-220, Val-277, Ala-279, Ser-301, and Arg-348.

Belongs to the zinc-containing alcohol dehydrogenase family. Class-P subfamily. In terms of assembly, homodimer. It depends on Zn(2+) as a cofactor. Mainly expressed in young roots and, to a lower extent, in stems and leaves.

Its subcellular location is the cytoplasm. The catalysed reaction is (E)-cinnamyl alcohol + NADP(+) = (E)-cinnamaldehyde + NADPH + H(+). Functionally, alcohol dehydrogenase that catalyzes the conversion of (E)-cinnamyl alcohol to (E)-cinnamaldehyde. The chain is Cinnamyl alcohol dehydrogenase 2 from Rauvolfia serpentina (Serpentine wood).